The following is a 140-amino-acid chain: Small ribosomal subunit protein uS19 (140 aa).

It belongs to the universal ribosomal protein uS19 family.

Functionally, protein S19 forms a complex with S13 that binds strongly to the 16S ribosomal RNA. The protein is Small ribosomal subunit protein uS19 of Metallosphaera sedula (strain ATCC 51363 / DSM 5348 / JCM 9185 / NBRC 15509 / TH2).